The primary structure comprises 89 residues: Defensin-like protein 78 (89 aa).

The N-terminal stretch at 1–30 (MANNMVASPYKNTFMMIALVLILLISGSEA) is a signal peptide. Intrachain disulfides connect Cys40–Cys75, Cys44–Cys67, Cys52–Cys73, and Cys56–Cys74.

This sequence belongs to the DEFL family.

The protein localises to the secreted. This Arabidopsis thaliana (Mouse-ear cress) protein is Defensin-like protein 78.